Here is a 366-residue protein sequence, read N- to C-terminus: MKEGLRVILSGGGTGGHIYPAIAIADEIKRRYPNAEILFVGAQDRMEMEKVPQAGYEIKGLWISGIDRSFSLKNFIFPFKLMSSLSKSRKIIKKFKPDIVIGTGGFGSGPLLRIAISKGIPTLIQEQNSLPGVTNRILSKNASIICAAYEKVKDVFPAEKTIITGNPVRQDLLKVDQLREEALEYFQLSKDKKTVLVLGGSLGARRINRLIENDLKKFKDEGVQLVWQIGKLYFDEYRKYDSATVRAKEFINRMDLAYAAADVIISRAGAGSVSELCVVGKPVLFIPSPNVAENHQAKNAMAVTEHDAALMITEDELTERFEPCFFSLLQDERRMNRFAANIKKLALPNATSDIVDEVEKLINNKV.

UDP-N-acetyl-alpha-D-glucosamine-binding positions include 14–16, N128, R169, S201, I251, and Q296; that span reads TGG.

It belongs to the glycosyltransferase 28 family. MurG subfamily.

The protein resides in the cell inner membrane. The catalysed reaction is di-trans,octa-cis-undecaprenyl diphospho-N-acetyl-alpha-D-muramoyl-L-alanyl-D-glutamyl-meso-2,6-diaminopimeloyl-D-alanyl-D-alanine + UDP-N-acetyl-alpha-D-glucosamine = di-trans,octa-cis-undecaprenyl diphospho-[N-acetyl-alpha-D-glucosaminyl-(1-&gt;4)]-N-acetyl-alpha-D-muramoyl-L-alanyl-D-glutamyl-meso-2,6-diaminopimeloyl-D-alanyl-D-alanine + UDP + H(+). The protein operates within cell wall biogenesis; peptidoglycan biosynthesis. In terms of biological role, cell wall formation. Catalyzes the transfer of a GlcNAc subunit on undecaprenyl-pyrophosphoryl-MurNAc-pentapeptide (lipid intermediate I) to form undecaprenyl-pyrophosphoryl-MurNAc-(pentapeptide)GlcNAc (lipid intermediate II). The sequence is that of UDP-N-acetylglucosamine--N-acetylmuramyl-(pentapeptide) pyrophosphoryl-undecaprenol N-acetylglucosamine transferase from Christiangramia forsetii (strain DSM 17595 / CGMCC 1.15422 / KT0803) (Gramella forsetii).